The following is an 820-amino-acid chain: Phosphoenolpyruvate synthase (820 aa).

Residue His438 is the Tele-phosphohistidine intermediate of the active site. Substrate-binding residues include Arg539, Arg587, Glu689, Gly710, Ser711, Asn712, and Asp713. Glu689 contacts Mg(2+). Asp713 provides a ligand contact to Mg(2+). Cys762 acts as the Proton donor in catalysis.

The protein belongs to the PEP-utilizing enzyme family. Requires Mg(2+) as cofactor.

It carries out the reaction pyruvate + ATP + H2O = phosphoenolpyruvate + AMP + phosphate + 2 H(+). It participates in carbohydrate biosynthesis; gluconeogenesis. Catalyzes the phosphorylation of pyruvate to phosphoenolpyruvate. The sequence is that of Phosphoenolpyruvate synthase (ppsA) from Aeropyrum pernix (strain ATCC 700893 / DSM 11879 / JCM 9820 / NBRC 100138 / K1).